The sequence spans 464 residues: Properdin (464 aa).

The N-terminal stretch at 1-22 (MPAEMQAPQWLLLLLVILPATG) is a signal peptide. 7 TSP type-1 domains span residues 24–72 (DPVL…QACR), 73–130 (SPQW…PCCP), 132–187 (MGGW…KTCP), 189–251 (HGAW…PPCP), 253–309 (AGGW…VPCP), 311–372 (NGEW…HNCI), and 374–457 (KGSW…PVCK). Cystine bridges form between C28–C52, C39–C68, and C53–C71. W79 and W82 each carry a C-linked (Man) tryptophan glycan. Intrachain disulfides connect C85-C123, C89-C129, C100-C107, C128-C166, C144-C180, C148-C186, and C159-C170. Residues W135, W138, and W141 are each glycosylated (C-linked (Man) tryptophan). A glycan (O-linked (Fuc...) threonine) is linked at T147. C-linked (Man) tryptophan glycans are attached at residues W192, W195, and W198. 3 disulfide bridges follow: C201–C244, C205–C250, and C220–C234. S204 carries O-linked (Fuc...) serine glycosylation. C-linked (Man) tryptophan glycosylation is found at W256 and W259. 3 disulfides stabilise this stretch: C265/C302, C269/C308, and C280/C292. O-linked (Fuc...) threonine glycosylation is present at T268. C-linked (Man) tryptophan glycans are attached at residues W317 and W320. 3 disulfide bridges follow: C323–C365, C332–C371, and C345–C355. The interval 346 to 354 (GGRKFNGKP) is interaction with Complement C3 beta chain. 3 C-linked (Man) tryptophan glycosylation sites follow: W377, W380, and W383. 3 cysteine pairs are disulfide-bonded: C386–C450, C390–C456, and C402–C434. An N-linked (GlcNAc...) asparagine glycan is attached at N423.

In terms of assembly, in plasma, properdin exists as dimers, trimers or tetramers in the relative proportions of 26:54:20. Interacts with the pro-C3-convertase enzyme complex (C3b-Bb) comprised of Complement C3 beta chain (C3b) and the Complement factor B Bb fragment (Bb), where it binds (via its TSP type-1 5 domain) with C3b and Bb. This interaction stabilizes the complex and allows it to become the active C3-convertase enzyme complex (C3b-Bb-FP). Interacts with C3b. Interacts with CFB.

Its subcellular location is the secreted. A positive regulator of the alternate pathway of complement. It binds to and stabilizes the C3- and C5-convertase enzyme complexes. Inhibits CFI-CFH mediated degradation of Inhibits CFI-CFH mediated degradation of Complement C3 beta chain (C3b). This is Properdin (Cfp) from Mus musculus (Mouse).